The following is a 184-amino-acid chain: ATP synthase subunit delta (184 aa).

This sequence belongs to the ATPase delta chain family. F-type ATPases have 2 components, F(1) - the catalytic core - and F(0) - the membrane proton channel. F(1) has five subunits: alpha(3), beta(3), gamma(1), delta(1), epsilon(1). CF(0) has four main subunits: a(1), b(1), b'(1) and c(10-14). The alpha and beta chains form an alternating ring which encloses part of the gamma chain. F(1) is attached to F(0) by a central stalk formed by the gamma and epsilon chains, while a peripheral stalk is formed by the delta, b and b' chains.

It localises to the cell inner membrane. In terms of biological role, f(1)F(0) ATP synthase produces ATP from ADP in the presence of a proton or sodium gradient. F-type ATPases consist of two structural domains, F(1) containing the extramembraneous catalytic core and F(0) containing the membrane proton channel, linked together by a central stalk and a peripheral stalk. During catalysis, ATP synthesis in the catalytic domain of F(1) is coupled via a rotary mechanism of the central stalk subunits to proton translocation. This protein is part of the stalk that links CF(0) to CF(1). It either transmits conformational changes from CF(0) to CF(1) or is implicated in proton conduction. This Erythrobacter litoralis (strain HTCC2594) protein is ATP synthase subunit delta.